Consider the following 147-residue polypeptide: Cyanate hydratase (147 aa).

Residues arginine 88, glutamate 91, and serine 114 contribute to the active site.

This sequence belongs to the cyanase family.

The catalysed reaction is cyanate + hydrogencarbonate + 3 H(+) = NH4(+) + 2 CO2. Catalyzes the reaction of cyanate with bicarbonate to produce ammonia and carbon dioxide. In Polaromonas sp. (strain JS666 / ATCC BAA-500), this protein is Cyanate hydratase.